Consider the following 459-residue polypeptide: ATP-dependent protease ATPase subunit HslU (459 aa).

Residues valine 26, 68–73 (GVGKTE), aspartate 271, glutamate 337, and arginine 409 each bind ATP.

The protein belongs to the ClpX chaperone family. HslU subfamily. A double ring-shaped homohexamer of HslV is capped on each side by a ring-shaped HslU homohexamer. The assembly of the HslU/HslV complex is dependent on binding of ATP.

The protein resides in the cytoplasm. Functionally, ATPase subunit of a proteasome-like degradation complex; this subunit has chaperone activity. The binding of ATP and its subsequent hydrolysis by HslU are essential for unfolding of protein substrates subsequently hydrolyzed by HslV. HslU recognizes the N-terminal part of its protein substrates and unfolds these before they are guided to HslV for hydrolysis. This is ATP-dependent protease ATPase subunit HslU from Xylella fastidiosa (strain M23).